Consider the following 161-residue polypeptide: Large ribosomal subunit protein uL30m (161 aa).

The N-terminal 34 residues, 1–34 (MAGILRLVVQWPPGRLQTVTKGVESLICTDWIRH), are a transit peptide targeting the mitochondrion.

Belongs to the universal ribosomal protein uL30 family. As to quaternary structure, component of the mitochondrial large ribosomal subunit (mt-LSU). Mature mammalian 55S mitochondrial ribosomes consist of a small (28S) and a large (39S) subunit. The 28S small subunit contains a 12S ribosomal RNA (12S mt-rRNA) and 30 different proteins. The 39S large subunit contains a 16S rRNA (16S mt-rRNA), a copy of mitochondrial valine transfer RNA (mt-tRNA(Val)), which plays an integral structural role, and 52 different proteins.

It is found in the mitochondrion. This is Large ribosomal subunit protein uL30m (MRPL30) from Homo sapiens (Human).